A 263-amino-acid polypeptide reads, in one-letter code: 3-methyl-2-oxobutanoate hydroxymethyltransferase (263 aa).

Residues Asp43 and Asp82 each coordinate Mg(2+). 3-methyl-2-oxobutanoate is bound by residues 43–44 (DS), Asp82, and Lys111. Position 113 (Glu113) interacts with Mg(2+). Glu179 acts as the Proton acceptor in catalysis.

The protein belongs to the PanB family. In terms of assembly, homodecamer; pentamer of dimers. The cofactor is Mg(2+).

It is found in the cytoplasm. The catalysed reaction is 3-methyl-2-oxobutanoate + (6R)-5,10-methylene-5,6,7,8-tetrahydrofolate + H2O = 2-dehydropantoate + (6S)-5,6,7,8-tetrahydrofolate. It functions in the pathway cofactor biosynthesis; (R)-pantothenate biosynthesis; (R)-pantoate from 3-methyl-2-oxobutanoate: step 1/2. Its function is as follows. Catalyzes the reversible reaction in which hydroxymethyl group from 5,10-methylenetetrahydrofolate is transferred onto alpha-ketoisovalerate to form ketopantoate. In Neisseria meningitidis serogroup A / serotype 4A (strain DSM 15465 / Z2491), this protein is 3-methyl-2-oxobutanoate hydroxymethyltransferase.